The following is a 498-amino-acid chain: Glycerol kinase (498 aa).

ADP is bound at residue threonine 12. ATP is bound by residues threonine 12, threonine 13, and serine 14. Threonine 12 provides a ligand contact to sn-glycerol 3-phosphate. Arginine 16 serves as a coordination point for ADP. Sn-glycerol 3-phosphate is bound by residues arginine 82, glutamate 83, and tyrosine 134. The glycerol site is built by arginine 82, glutamate 83, and tyrosine 134. Position 230 is a phosphohistidine; by HPr (histidine 230). Aspartate 244 contacts sn-glycerol 3-phosphate. Residues aspartate 244 and glutamine 245 each contribute to the glycerol site. Threonine 266 and glycine 309 together coordinate ADP. Residues threonine 266, glycine 309, glutamine 313, and glycine 410 each coordinate ATP. Positions 410 and 414 each coordinate ADP.

This sequence belongs to the FGGY kinase family. In terms of assembly, homotetramer and homodimer (in equilibrium). Post-translationally, the phosphoenolpyruvate-dependent sugar phosphotransferase system (PTS), including enzyme I, and histidine-containing protein (HPr) are required for the phosphorylation, which leads to the activation of the enzyme.

It catalyses the reaction glycerol + ATP = sn-glycerol 3-phosphate + ADP + H(+). It functions in the pathway polyol metabolism; glycerol degradation via glycerol kinase pathway; sn-glycerol 3-phosphate from glycerol: step 1/1. Its activity is regulated as follows. Activated by phosphorylation and inhibited by fructose 1,6-bisphosphate (FBP). Its function is as follows. Key enzyme in the regulation of glycerol uptake and metabolism. Catalyzes the phosphorylation of glycerol to yield sn-glycerol 3-phosphate. This Staphylococcus aureus (strain MRSA252) protein is Glycerol kinase.